A 268-amino-acid chain; its full sequence is 4-hydroxy-tetrahydrodipicolinate reductase (268 aa).

NAD(+) is bound by residues 10 to 15 (GSTGRM), Glu-36, 99 to 101 (GTT), and 123 to 126 (APNM). His-156 functions as the Proton donor/acceptor in the catalytic mechanism. His-157 contacts (S)-2,3,4,5-tetrahydrodipicolinate. The active-site Proton donor is the Lys-160. 166–167 (GT) lines the (S)-2,3,4,5-tetrahydrodipicolinate pocket.

Belongs to the DapB family.

The protein resides in the cytoplasm. It catalyses the reaction (S)-2,3,4,5-tetrahydrodipicolinate + NAD(+) + H2O = (2S,4S)-4-hydroxy-2,3,4,5-tetrahydrodipicolinate + NADH + H(+). The enzyme catalyses (S)-2,3,4,5-tetrahydrodipicolinate + NADP(+) + H2O = (2S,4S)-4-hydroxy-2,3,4,5-tetrahydrodipicolinate + NADPH + H(+). The protein operates within amino-acid biosynthesis; L-lysine biosynthesis via DAP pathway; (S)-tetrahydrodipicolinate from L-aspartate: step 4/4. Its function is as follows. Catalyzes the conversion of 4-hydroxy-tetrahydrodipicolinate (HTPA) to tetrahydrodipicolinate. The chain is 4-hydroxy-tetrahydrodipicolinate reductase from Nitrosomonas europaea (strain ATCC 19718 / CIP 103999 / KCTC 2705 / NBRC 14298).